The sequence spans 887 residues: CWF19-like protein 2 (887 aa).

The segment at 1-143 is disordered; it reads MEAFSVRFES…DKRTEEECDS (143 aa). A coiled-coil region spans residues 11–103; sequence ASSIEERKEQ…KKQKCQKQSE (93 aa). Positions 14–72 are enriched in basic and acidic residues; the sequence is IEERKEQTRNARAEVLRQAKHNFEKEQRGEERKRLRDEDTWMLPDVHERIEQFSQEHSE. Ser-71 is subject to Phosphoserine. The span at 73–98 shows a compositional bias: basic residues; it reads KKKKKKDKHSKKVKKEKKKKRKKQKC. Residues 99 to 110 show a composition bias toward low complexity; that stretch reads QKQSESTDSSAS. Residues 124 to 143 are compositionally biased toward basic and acidic residues; it reads SDKEKTWKVKDKRTEEECDS. A coiled-coil region spans residues 164 to 254; that stretch reads SSSLKAEKET…RNFEDIVAEK (91 aa). Residue Lys-168 forms a Glycyl lysine isopeptide (Lys-Gly) (interchain with G-Cter in SUMO2) linkage. 2 disordered regions span residues 315–370 and 405–447; these read LEME…DEDE and SEES…GRRE. Basic and acidic residues predominate over residues 342 to 352; the sequence is CRRESALRKNQ. Phosphoserine occurs at positions 354 and 366. Residues 414-430 are compositionally biased toward basic and acidic residues; it reads RSDRRQENRKPSDKKPL. The span at 433-442 shows a compositional bias: polar residues; sequence WSYNANQHST. Position 478 is a phosphoserine (Ser-478). A coiled-coil region spans residues 495–524; that stretch reads IKAEMMGNMELAEQLKAQLKEANKFKETQM. Lys-597 is covalently cross-linked (Glycyl lysine isopeptide (Lys-Gly) (interchain with G-Cter in SUMO2)). Ser-622 carries the post-translational modification Phosphoserine.

The protein belongs to the CWF19 family.

The polypeptide is CWF19-like protein 2 (Cwf19l2) (Mus musculus (Mouse)).